Consider the following 280-residue polypeptide: Alpha-aminoadipate--LysW ligase LysX (280 aa).

Residues Lys89, Lys129, 133–139 (GSWGRLL), 169–180 (QEYVEKPGRDIR), Arg194, and Asn202 each bind ATP. The ATP-grasp domain maps to 93–276 (SVALAKAGLP…IPGEILKYAW (184 aa)). Mg(2+) contacts are provided by Asp237, Glu249, and Asn251. Residues 258 to 259 (NS) carry the N-[TS] motif that is essential for LysX substrate specificity motif.

The protein belongs to the RimK family. LysX subfamily. As to quaternary structure, homodimer. Requires Mg(2+) as cofactor.

It catalyses the reaction [amino-group carrier protein]-C-terminal-L-glutamate + L-2-aminoadipate + ATP = [amino-group carrier protein]-C-terminal-N-(1,4-dicarboxybutan-1-yl)-L-glutamine + ADP + phosphate + H(+). The protein operates within amino-acid biosynthesis; L-lysine biosynthesis via AAA pathway; L-lysine from L-alpha-aminoadipate (Thermus route): step 1/5. Catalyzes the ATP-dependent formation of a covalent bond between the amino group of alpha-aminoadipate (AAA) and the gamma-carboxyl group of the C-terminal glutamate residue in LysW. This chain is Alpha-aminoadipate--LysW ligase LysX (lysX), found in Thermus thermophilus (strain ATCC 27634 / DSM 579 / HB8).